We begin with the raw amino-acid sequence, 294 residues long: Nucleotide-binding protein CPF_0343 (294 aa).

8-15 (GLSGAGKT) provides a ligand contact to ATP. 59 to 62 (DIRG) is a binding site for GTP.

It belongs to the RapZ-like family.

In terms of biological role, displays ATPase and GTPase activities. This Clostridium perfringens (strain ATCC 13124 / DSM 756 / JCM 1290 / NCIMB 6125 / NCTC 8237 / Type A) protein is Nucleotide-binding protein CPF_0343.